The primary structure comprises 203 residues: Cupin-domain-containing oxidoreductase fogC (203 aa).

Residues 105–171 (DFAPGVESPL…GNGTLPGRML (67 aa)) are cupin-like domain.

It belongs to the virC family.

It functions in the pathway secondary metabolite biosynthesis. Its function is as follows. Cupin-domain-containing oxidoreductase; part of the gene cluster that mediates the biosynthesis of flavoglaucin and congeners (including aspergin, dihydroauroglaucin and auroglaucin), prenylated salicylaldehyde derivatives carrying a saturated or an unsaturated C-7 side chain. The PKS fogA releases the carboxylic acid (8E,10E,12E)-3,5,7-trihydroxytetradeca-8,10,12-trienoic acid as its product, as well as derivatives with one and two double bonds. FogA is indeed able to reduce the initial triketide, thus being at least partially responsible for the differently saturated heptyl side chains of flavoglaucin congeners. The oxidoreductases fogB, fogC and fogD modify the nascent polyketide in fogA-bound form and, together, fogA, fogB, fogC and fogD are necessary for the formation of the aromatic core and the cyclized PKS products are released as salicyl alcohols. In particular, fogB is responsible for oxidation of a hydroxyl group or reduction of remaining double bond(s) at the C-7 residue whereas fogD is probably involved in the reductive release of the modified PKS products. The cytochrome P450 monooxygenase fogE is then responsible for the hydroxylation at C-3 of the benzene ring. The fogE products are substrates of the prenyltransferase fogH and the prenylated benzyl alcohols are subsequently oxidized by the fogF to produce the final aryl aldehydes flavoglaucin and congeners. The short-chain dehydrogenase fogG does not seem to be involved in the biosynthesis of the prenylated salicylaldehyde derivatives. The polypeptide is Cupin-domain-containing oxidoreductase fogC (Aspergillus ruber (strain CBS 135680)).